The following is a 474-amino-acid chain: BPI fold-containing family B member 1 (474 aa).

The signal sequence occupies residues 1-21 (MAGPWIITLLCGLLGATLVQA). N153, N160, N263, and N400 each carry an N-linked (GlcNAc...) asparagine glycan. A disulfide bridge connects residues C157 and C200.

The protein belongs to the BPI/LBP/Plunc superfamily. Plunc family. Expressed in tongue, lung, thymus, and stomach. Expressed in epithelia of palate, anterior pharynx, trachea and upper bronchi. Expressed in distal tip of papillae in the anterior third of the tongue and in serous cells of von Ebner glands in the posterior third of the tongue. Expressed in columnar epithelium of the duodenum in embryonic gut at 16.5 dpc.

The protein resides in the secreted. In terms of biological role, may play a role in innate immunity in mouth, nose and lungs. Binds bacterial lipopolysaccharide (LPS) and modulates the cellular responses to LPS. May be involved in formation of the left-right axis in the node of the developing embryo. This is BPI fold-containing family B member 1 (Bpifb1) from Mus musculus (Mouse).